The chain runs to 357 residues: Alanine racemase (357 aa).

K33 serves as the catalytic Proton acceptor; specific for D-alanine. At K33 the chain carries N6-(pyridoxal phosphate)lysine. A substrate-binding site is contributed by R129. Y253 acts as the Proton acceptor; specific for L-alanine in catalysis. Residue M301 participates in substrate binding.

This sequence belongs to the alanine racemase family. Requires pyridoxal 5'-phosphate as cofactor.

It catalyses the reaction L-alanine = D-alanine. Its pathway is amino-acid biosynthesis; D-alanine biosynthesis; D-alanine from L-alanine: step 1/1. Catalyzes the interconversion of L-alanine and D-alanine. May also act on other amino acids. In Pseudomonas fluorescens (strain ATCC BAA-477 / NRRL B-23932 / Pf-5), this protein is Alanine racemase (alr).